The primary structure comprises 300 residues: Ribosomal protein bS6--L-glutamate ligase (300 aa).

One can recognise an ATP-grasp domain in the interval 104–287 (MQLLARQGID…IAGKMIRWIE (184 aa)). ATP is bound by residues K141, 178–179 (EY), D187, and 211–213 (RSN). Residues D248, E260, and N262 each contribute to the Mg(2+) site. Residues D248, E260, and N262 each coordinate Mn(2+).

Belongs to the RimK family. It depends on Mg(2+) as a cofactor. The cofactor is Mn(2+).

An L-glutamate ligase that catalyzes the ATP-dependent post-translational addition of glutamate residues to the C-terminus of ribosomal protein bS6 (RpsF). Is also able to catalyze the synthesis of poly-alpha-glutamate in vitro, via ATP hydrolysis from unprotected glutamate as substrate. The number of glutamate residues added to either RpsF or to poly-alpha-glutamate changes with pH. This is Ribosomal protein bS6--L-glutamate ligase from Shigella boydii serotype 18 (strain CDC 3083-94 / BS512).